A 205-amino-acid chain; its full sequence is Ephrin-A1 (205 aa).

Positions M1–A18 are cleaved as a signal peptide. Residues D19–I151 form the Ephrin RBD domain. A glycan (N-linked (GlcNAc...) asparagine) is linked at N26. Cystine bridges form between C51–C92 and C80–C140. S182 carries GPI-anchor amidated serine lipidation. Positions A183 to S205 are cleaved as a propeptide — removed in mature form.

The protein belongs to the ephrin family. As to quaternary structure, monomer. Homodimer. Forms heterodimers with EPHA2. Binds to the receptor tyrosine kinases EPHA2, EPHA3, EPHA4, EPHA5, EPHA6 and EPHA7. Also binds with low affinity to EPHA1. Post-translationally, undergoes proteolysis by a metalloprotease to give rise to a soluble monomeric form. N-Glycosylation is required for binding to EPHA2 receptor and inducing its internalization.

The protein localises to the cell membrane. Its subcellular location is the secreted. In terms of biological role, cell surface GPI-bound ligand for Eph receptors, a family of receptor tyrosine kinases which are crucial for migration, repulsion and adhesion during neuronal, vascular and epithelial development. Binds promiscuously Eph receptors residing on adjacent cells, leading to contact-dependent bidirectional signaling into neighboring cells. Plays an important role in angiogenesis and tumor neovascularization. The recruitment of VAV2, VAV3 and PI3-kinase p85 subunit by phosphorylated EPHA2 is critical for EFNA1-induced RAC1 GTPase activation and vascular endothelial cell migration and assembly. Exerts anti-oncogenic effects in tumor cells through activation and down-regulation of EPHA2. Activates EPHA2 by inducing tyrosine phosphorylation which leads to its internalization and degradation. Acts as a negative regulator in the tumorigenesis of gliomas by down-regulating EPHA2 and FAK. Can evoke collapse of embryonic neuronal growth cone and regulates dendritic spine morphogenesis. The protein is Ephrin-A1 (EFNA1) of Sus scrofa (Pig).